The sequence spans 174 residues: Actin-related protein 2/3 complex subunit 3 (174 aa).

The protein belongs to the ARPC3 family. Component of the Arp2/3 complex composed of arpB/Arp2, arpC/Arp3, arcA/p41-arc, arcB/p34-arc, arcC/p21-arc, arcD/p20-arc and arcE/p16-arc. Interacts with carmil (via the region between the LRR domain and COOH-terminal proline-rich domain); carmil is required for Arp2/3-dependent actin nucleation. Arp2/3 complex, MyoB, MyoC, and the alpha and beta subunits of capping protein all form a larger complex with carmil.

It is found in the cytoplasm. It localises to the cytoskeleton. The protein localises to the cytosol. The protein resides in the cell cortex. Its subcellular location is the cell projection. It is found in the pseudopodium. Functions as a component of the Arp2/3 complex which is involved in regulation of actin polymerization and together with an activating nucleation-promoting factor (NPF) mediates the formation of branched actin networks. Seems to contact the pointed end of the daughter actin filament. The Arp2/3 complex is involved in organizing the actin system in cell motility and chemotaxis, in phagocytosis and macropinocytosis, at late steps of endosome processing, and in mitosis. In concert with a group of other proteins, the Arp2/3 complex plays a general role in the rapid activation and adaptation of the actin system to its multiple functions. In Dictyostelium discoideum (Social amoeba), this protein is Actin-related protein 2/3 complex subunit 3 (arcC).